Consider the following 340-residue polypeptide: Ketol-acid reductoisomerase (NADP(+)) (340 aa).

One can recognise a KARI N-terminal Rossmann domain in the interval 1–183 (MAITVYYDKD…GGGRTGIIET (183 aa)). NADP(+)-binding positions include 26-29 (FGSQ), S54, and 84-87 (DEFQ). The active site involves H109. G135 provides a ligand contact to NADP(+). A KARI C-terminal knotted domain is found at 184–329 (TFKAETETDL…EKLRGMMPWI (146 aa)). The Mg(2+) site is built by D192, E196, E228, and E232. Substrate is bound at residue S253.

This sequence belongs to the ketol-acid reductoisomerase family. Mg(2+) serves as cofactor.

The catalysed reaction is (2R)-2,3-dihydroxy-3-methylbutanoate + NADP(+) = (2S)-2-acetolactate + NADPH + H(+). The enzyme catalyses (2R,3R)-2,3-dihydroxy-3-methylpentanoate + NADP(+) = (S)-2-ethyl-2-hydroxy-3-oxobutanoate + NADPH + H(+). Its pathway is amino-acid biosynthesis; L-isoleucine biosynthesis; L-isoleucine from 2-oxobutanoate: step 2/4. It functions in the pathway amino-acid biosynthesis; L-valine biosynthesis; L-valine from pyruvate: step 2/4. Functionally, involved in the biosynthesis of branched-chain amino acids (BCAA). Catalyzes an alkyl-migration followed by a ketol-acid reduction of (S)-2-acetolactate (S2AL) to yield (R)-2,3-dihydroxy-isovalerate. In the isomerase reaction, S2AL is rearranged via a Mg-dependent methyl migration to produce 3-hydroxy-3-methyl-2-ketobutyrate (HMKB). In the reductase reaction, this 2-ketoacid undergoes a metal-dependent reduction by NADPH to yield (R)-2,3-dihydroxy-isovalerate. The polypeptide is Ketol-acid reductoisomerase (NADP(+)) (Campylobacter fetus subsp. fetus (strain 82-40)).